Here is a 792-residue protein sequence, read N- to C-terminus: Phenylalanine--tRNA ligase beta subunit (792 aa).

Residues 39 to 150 (GDEITNVVTG…ENTPIGKDIK (112 aa)) form the tRNA-binding domain. The 76-residue stretch at 404-479 (SEPNIVEVDY…RIYGYNKVPS (76 aa)) folds into the B5 domain. 4 residues coordinate Mg(2+): Asp-457, Asp-463, Glu-466, and Glu-467. One can recognise an FDX-ACB domain in the interval 699–792 (PKFPTVTRDI…LEHVLGAELR (94 aa)).

It belongs to the phenylalanyl-tRNA synthetase beta subunit family. Type 1 subfamily. As to quaternary structure, tetramer of two alpha and two beta subunits. Mg(2+) serves as cofactor.

Its subcellular location is the cytoplasm. The enzyme catalyses tRNA(Phe) + L-phenylalanine + ATP = L-phenylalanyl-tRNA(Phe) + AMP + diphosphate + H(+). This is Phenylalanine--tRNA ligase beta subunit from Clostridium acetobutylicum (strain ATCC 824 / DSM 792 / JCM 1419 / IAM 19013 / LMG 5710 / NBRC 13948 / NRRL B-527 / VKM B-1787 / 2291 / W).